The primary structure comprises 196 residues: MFIKCYSGGGRLLLEETLKSCPIVKRGQYHYFIHPISDGVPLVEPKLLREVAMRIIKIGNFEDVDKLVTAEAMGIPLVTTLSLYTDIPYVIMRKREYKLPGEIPVFQSTGYSKGQLYLNGIEKGDKVVIIDDVISTGGTMIAIINALKRAGAEIKDIICVIERGEGKKIVEEKTGYKIKTLVKIDVVDGKVVILRD.

The protein belongs to the purine/pyrimidine phosphoribosyltransferase family. Archaeal HPRT subfamily. As to quaternary structure, homodimer.

It localises to the cytoplasm. The catalysed reaction is IMP + diphosphate = hypoxanthine + 5-phospho-alpha-D-ribose 1-diphosphate. The enzyme catalyses GMP + diphosphate = guanine + 5-phospho-alpha-D-ribose 1-diphosphate. It participates in purine metabolism; IMP biosynthesis via salvage pathway; IMP from hypoxanthine: step 1/1. In terms of biological role, catalyzes a salvage reaction resulting in the formation of IMP that is energically less costly than de novo synthesis. This Methanocaldococcus sp. (strain FS406-22) protein is Hypoxanthine/guanine phosphoribosyltransferase.